Reading from the N-terminus, the 191-residue chain is Protein YceI (191 aa).

The N-terminal stretch at 1–22 (MKKSLLGLTFASLMFSAGSAVA) is a signal peptide.

Belongs to the UPF0312 family. Type 1 subfamily.

The protein localises to the periplasm. This is Protein YceI from Escherichia coli O17:K52:H18 (strain UMN026 / ExPEC).